The chain runs to 82 residues: Sec-independent protein translocase protein TatA (82 aa).

Residues 1-21 traverse the membrane as a helical segment; sequence MGGISIWQLLIIAVIIVLLFG. The interval 48–82 is disordered; sequence SAKDAKKDADFVPQNLEKKEAETVEKQKQNDKEQA.

Belongs to the TatA/E family. In terms of assembly, the Tat system comprises two distinct complexes: a TatABC complex, containing multiple copies of TatA, TatB and TatC subunits, and a separate TatA complex, containing only TatA subunits. Substrates initially bind to the TatABC complex, which probably triggers association of the separate TatA complex to form the active translocon.

It is found in the cell inner membrane. In terms of biological role, part of the twin-arginine translocation (Tat) system that transports large folded proteins containing a characteristic twin-arginine motif in their signal peptide across membranes. TatA could form the protein-conducting channel of the Tat system. The polypeptide is Sec-independent protein translocase protein TatA (Aliivibrio salmonicida (strain LFI1238) (Vibrio salmonicida (strain LFI1238))).